The following is a 132-amino-acid chain: Histone H2A (132 aa).

The span at 1 to 13 (MSAKGKTGRKKAS) shows a compositional bias: basic residues. The disordered stretch occupies residues 1–21 (MSAKGKTGRKKASKGTSNSAK).

This sequence belongs to the histone H2A family. The nucleosome is a histone octamer containing two molecules each of H2A, H2B, H3 and H4 assembled in one H3-H4 heterotetramer and two H2A-H2B heterodimers. The octamer wraps approximately 147 bp of DNA.

The protein resides in the nucleus. It localises to the chromosome. Functionally, core component of nucleosome. Nucleosomes wrap and compact DNA into chromatin, limiting DNA accessibility to the cellular machineries which require DNA as a template. Histones thereby play a central role in transcription regulation, DNA repair, DNA replication and chromosomal stability. DNA accessibility is regulated via a complex set of post-translational modifications of histones, also called histone code, and nucleosome remodeling. The polypeptide is Histone H2A (Plasmodium falciparum).